A 354-amino-acid polypeptide reads, in one-letter code: MAELLRSLRDSQLVARFQRRCGLFPAREASGEEHVVKNYFYYYLFRFSAALGQEVFYITFLPFTHWNIDPNLSRRLVVIWVLVMYIGQVAKDILKWPRPSFPPVVRLEKRIIAEYGMPSTHAMAATAISFTLLISTMDRYQYPFILGLMMAVVFSTLVCLSRLYTGMHTVLDILGGVLITAVLIALTYPAWTLIDSLDSASPLFPVCVIVVPFLLCYNYPVSDYYSPTRADTTTIVAAGAGVTLGFWINHFFQLVSKPTPSLPVIQNIPPLTTDMLVLGLTKFMVGIMLILLVRQLVQKLSLQVLFSWFKVVTRNKEARRRLEIEVPYKFVTYTSVGICATTFVPMLHRFLGLL.

4 helical membrane-spanning segments follow: residues 43 to 63 (YLFR…FLPF), 76 to 96 (LVVI…ILKW), 115 to 135 (YGMP…LLIS), and 140 to 160 (YQYP…LVCL). The phosphatase sequence motif I stretch occupies residues 91 to 99 (KDILKWPRP). The phosphatase sequence motif II stretch occupies residues 118 to 121 (PSTH). The active-site Proton donor is the histidine 121. The segment at 161–172 (SRLYTGMHTVLD) is phosphatase sequence motif III. Residue histidine 168 is the Nucleophile of the active site. Transmembrane regions (helical) follow at residues 173–193 (ILGG…AWTL), 202–222 (PLFP…YPVS), 235–255 (IVAA…FQLV), 273–293 (TDML…ILLV), and 334–354 (TSVG…LGLL).

Belongs to the type 2 lipid phosphate phosphatase family. In terms of tissue distribution, highly expressed in pancreatic islets. Expressed in lung, small interstince, colon, kideny and brain.

The protein resides in the endoplasmic reticulum membrane. It carries out the reaction sphinganine 1-phosphate + H2O = sphinganine + phosphate. It catalyses the reaction sphing-4-enine 1-phosphate + H2O = sphing-4-enine + phosphate. The enzyme catalyses (4R)-hydroxysphinganine 1-phosphate + H2O = (4R)-hydroxysphinganine + phosphate. Its function is as follows. Has specific phosphohydrolase activity towards sphingoid base 1-phosphates. Has high phosphohydrolase activity against dihydrosphingosine-1-phosphate and sphingosine-1-phosphate (S1P) in vitro. Sphingosine-1-phosphate phosphatase activity is needed for efficient recycling of sphingosine into the sphingolipid synthesis pathway. May play a role in attenuating intracellular sphingosine 1-phosphate (S1P) signaling. May play a role in pro-inflammatory signaling. Plays a role in the regulation of pancreatic islet beta-cell endoplasmic reticulum stress and proliferation. The polypeptide is Sphingosine-1-phosphate phosphatase 2 (Mus musculus (Mouse)).